A 178-amino-acid polypeptide reads, in one-letter code: Large ribosomal subunit protein bL25 (178 aa).

Belongs to the bacterial ribosomal protein bL25 family. CTC subfamily. As to quaternary structure, part of the 50S ribosomal subunit; part of the 5S rRNA/L5/L18/L25 subcomplex. Contacts the 5S rRNA. Binds to the 5S rRNA independently of L5 and L18.

Functionally, this is one of the proteins that binds to the 5S RNA in the ribosome where it forms part of the central protuberance. This is Large ribosomal subunit protein bL25 from Helicobacter pylori (strain G27).